The sequence spans 526 residues: CTP synthase (526 aa).

The segment at 1–264 is amidoligase domain; sequence MPQRFIVVTG…HKLIAKELDI (264 aa). Residue S14 participates in CTP binding. S14 contributes to the UTP binding site. Residues 15–20 and D72 each bind ATP; that span reads GIGKGI. D72 and E138 together coordinate Mg(2+). Residues 145-147, 185-190, and K221 contribute to the CTP site; these read DIE and KTKPTQ. Residues 185–190 and K221 each bind UTP; that span reads KTKPTQ. The 245-residue stretch at 282–526 folds into the Glutamine amidotransferase type-1 domain; sequence KIGIVGKYLG…VKAAGGKIND (245 aa). G342 serves as a coordination point for L-glutamine. C369 acts as the Nucleophile; for glutamine hydrolysis in catalysis. L-glutamine-binding positions include 370-373, E393, and R451; that span reads LGMQ. Active-site residues include H499 and E501.

This sequence belongs to the CTP synthase family. Homotetramer.

The enzyme catalyses UTP + L-glutamine + ATP + H2O = CTP + L-glutamate + ADP + phosphate + 2 H(+). It catalyses the reaction L-glutamine + H2O = L-glutamate + NH4(+). The catalysed reaction is UTP + NH4(+) + ATP = CTP + ADP + phosphate + 2 H(+). It participates in pyrimidine metabolism; CTP biosynthesis via de novo pathway; CTP from UDP: step 2/2. With respect to regulation, allosterically activated by GTP, when glutamine is the substrate; GTP has no effect on the reaction when ammonia is the substrate. The allosteric effector GTP functions by stabilizing the protein conformation that binds the tetrahedral intermediate(s) formed during glutamine hydrolysis. Inhibited by the product CTP, via allosteric rather than competitive inhibition. Its function is as follows. Catalyzes the ATP-dependent amination of UTP to CTP with either L-glutamine or ammonia as the source of nitrogen. Regulates intracellular CTP levels through interactions with the four ribonucleotide triphosphates. This Thermosipho africanus (strain TCF52B) protein is CTP synthase.